The following is a 225-amino-acid chain: uncharacterized protein (225 aa).

Residues M1–S19 show a composition bias toward polar residues. The interval M1 to N21 is disordered.

This is an uncharacterized protein from Dictyostelium discoideum (Social amoeba).